The following is an 85-amino-acid chain: Putative membrane protein insertion efficiency factor (85 aa).

The protein belongs to the UPF0161 family.

It is found in the cell inner membrane. Functionally, could be involved in insertion of integral membrane proteins into the membrane. The sequence is that of Putative membrane protein insertion efficiency factor from Serratia proteamaculans (strain 568).